Here is a 132-residue protein sequence, read N- to C-terminus: Small ribosomal subunit protein uS8 (132 aa).

It belongs to the universal ribosomal protein uS8 family. Part of the 30S ribosomal subunit. Contacts proteins S5 and S12.

Its function is as follows. One of the primary rRNA binding proteins, it binds directly to 16S rRNA central domain where it helps coordinate assembly of the platform of the 30S subunit. The chain is Small ribosomal subunit protein uS8 from Geobacillus thermodenitrificans (strain NG80-2).